The chain runs to 429 residues: Serine--tRNA ligase (429 aa).

L-serine is bound at residue threonine 229 to glutamate 231. Residue arginine 260–glutamate 262 coordinates ATP. Residue glutamate 283 participates in L-serine binding. ATP is bound at residue glutamate 347–serine 350. L-serine is bound at residue serine 383.

The protein belongs to the class-II aminoacyl-tRNA synthetase family. Type-1 seryl-tRNA synthetase subfamily. As to quaternary structure, homodimer. The tRNA molecule binds across the dimer.

Its subcellular location is the cytoplasm. The catalysed reaction is tRNA(Ser) + L-serine + ATP = L-seryl-tRNA(Ser) + AMP + diphosphate + H(+). The enzyme catalyses tRNA(Sec) + L-serine + ATP = L-seryl-tRNA(Sec) + AMP + diphosphate + H(+). It participates in aminoacyl-tRNA biosynthesis; selenocysteinyl-tRNA(Sec) biosynthesis; L-seryl-tRNA(Sec) from L-serine and tRNA(Sec): step 1/1. In terms of biological role, catalyzes the attachment of serine to tRNA(Ser). Is also able to aminoacylate tRNA(Sec) with serine, to form the misacylated tRNA L-seryl-tRNA(Sec), which will be further converted into selenocysteinyl-tRNA(Sec). The sequence is that of Serine--tRNA ligase from Orientia tsutsugamushi (strain Boryong) (Rickettsia tsutsugamushi).